Consider the following 346-residue polypeptide: Phosphoribosylformylglycinamidine cyclo-ligase (346 aa).

It belongs to the AIR synthase family.

The protein localises to the cytoplasm. It carries out the reaction 2-formamido-N(1)-(5-O-phospho-beta-D-ribosyl)acetamidine + ATP = 5-amino-1-(5-phospho-beta-D-ribosyl)imidazole + ADP + phosphate + H(+). It functions in the pathway purine metabolism; IMP biosynthesis via de novo pathway; 5-amino-1-(5-phospho-D-ribosyl)imidazole from N(2)-formyl-N(1)-(5-phospho-D-ribosyl)glycinamide: step 2/2. The polypeptide is Phosphoribosylformylglycinamidine cyclo-ligase (Bacillus cereus (strain B4264)).